We begin with the raw amino-acid sequence, 913 residues long: Protein translocase subunit SecA (913 aa).

Residues Q87, 105–109, and D512 each bind ATP; that span reads GEGKT. Residues 864–913 are disordered; sequence LDQPEEEPAEVEGQPDVAVASVRTEPKIGRNEPCPCGSGKKYKHCHGQVQ. C897, C899, C908, and H909 together coordinate Zn(2+). A compositionally biased stretch (basic residues) spans 903 to 913; that stretch reads KKYKHCHGQVQ.

It belongs to the SecA family. In terms of assembly, monomer and homodimer. Part of the essential Sec protein translocation apparatus which comprises SecA, SecYEG and auxiliary proteins SecDF-YajC and YidC. It depends on Zn(2+) as a cofactor.

It is found in the cell inner membrane. The protein localises to the cytoplasm. The catalysed reaction is ATP + H2O + cellular proteinSide 1 = ADP + phosphate + cellular proteinSide 2.. In terms of biological role, part of the Sec protein translocase complex. Interacts with the SecYEG preprotein conducting channel. Has a central role in coupling the hydrolysis of ATP to the transfer of proteins into and across the cell membrane, serving both as a receptor for the preprotein-SecB complex and as an ATP-driven molecular motor driving the stepwise translocation of polypeptide chains across the membrane. This chain is Protein translocase subunit SecA, found in Stutzerimonas stutzeri (strain A1501) (Pseudomonas stutzeri).